The primary structure comprises 472 residues: Protein nucleotidyltransferase YdiU (472 aa).

Positions 86, 88, 89, 109, 121, 122, 172, and 179 each coordinate ATP. The Proton acceptor role is filled by Asp244. Mg(2+)-binding residues include Asn245 and Asp254. Asp254 serves as a coordination point for ATP.

Belongs to the SELO family. Mg(2+) serves as cofactor. Requires Mn(2+) as cofactor.

It catalyses the reaction L-seryl-[protein] + ATP = 3-O-(5'-adenylyl)-L-seryl-[protein] + diphosphate. The enzyme catalyses L-threonyl-[protein] + ATP = 3-O-(5'-adenylyl)-L-threonyl-[protein] + diphosphate. The catalysed reaction is L-tyrosyl-[protein] + ATP = O-(5'-adenylyl)-L-tyrosyl-[protein] + diphosphate. It carries out the reaction L-histidyl-[protein] + UTP = N(tele)-(5'-uridylyl)-L-histidyl-[protein] + diphosphate. It catalyses the reaction L-seryl-[protein] + UTP = O-(5'-uridylyl)-L-seryl-[protein] + diphosphate. The enzyme catalyses L-tyrosyl-[protein] + UTP = O-(5'-uridylyl)-L-tyrosyl-[protein] + diphosphate. Its function is as follows. Nucleotidyltransferase involved in the post-translational modification of proteins. It can catalyze the addition of adenosine monophosphate (AMP) or uridine monophosphate (UMP) to a protein, resulting in modifications known as AMPylation and UMPylation. This chain is Protein nucleotidyltransferase YdiU, found in Ruegeria pomeroyi (strain ATCC 700808 / DSM 15171 / DSS-3) (Silicibacter pomeroyi).